Here is a 296-residue protein sequence, read N- to C-terminus: Protoheme IX farnesyltransferase (296 aa).

The next 9 helical transmembrane spans lie at 11 to 31 (PGII…AAQG), 35 to 55 (YPLF…GCVF), 84 to 104 (VTLV…YIAA), 107 to 127 (LAMW…SLYM), 132 to 152 (VYGT…GYCA), 162 to 182 (LILL…IAIF), 208 to 228 (ITLY…GGYA), 229 to 249 (GYKY…MALS), and 264 to 284 (LFVF…VDSM).

Belongs to the UbiA prenyltransferase family. Protoheme IX farnesyltransferase subfamily.

The protein localises to the cell inner membrane. The enzyme catalyses heme b + (2E,6E)-farnesyl diphosphate + H2O = Fe(II)-heme o + diphosphate. Its pathway is porphyrin-containing compound metabolism; heme O biosynthesis; heme O from protoheme: step 1/1. In terms of biological role, converts heme B (protoheme IX) to heme O by substitution of the vinyl group on carbon 2 of heme B porphyrin ring with a hydroxyethyl farnesyl side group. The chain is Protoheme IX farnesyltransferase from Pectobacterium carotovorum subsp. carotovorum (strain PC1).